The chain runs to 214 residues: 3-isopropylmalate dehydratase small subunit (214 aa).

This sequence belongs to the LeuD family. LeuD type 1 subfamily. As to quaternary structure, heterodimer of LeuC and LeuD.

The enzyme catalyses (2R,3S)-3-isopropylmalate = (2S)-2-isopropylmalate. The protein operates within amino-acid biosynthesis; L-leucine biosynthesis; L-leucine from 3-methyl-2-oxobutanoate: step 2/4. Its function is as follows. Catalyzes the isomerization between 2-isopropylmalate and 3-isopropylmalate, via the formation of 2-isopropylmaleate. This is 3-isopropylmalate dehydratase small subunit from Pseudomonas putida (strain GB-1).